Reading from the N-terminus, the 478-residue chain is Shikimate biosynthesis protein AroDE (478 aa).

The 3-dehydroquinate dehydratase stretch occupies residues 1–208; the sequence is MLCTIIRGPS…LNHHYFYNFT (208 aa). 3-dehydroquinate-binding positions include serine 21, 29–31, and 55–57; these read EMR and TWK. Histidine 110 functions as the Proton donor/acceptor; for 3-dehydroquinate dehydratase activity in the catalytic mechanism. Catalysis depends on lysine 133, which acts as the Schiff-base intermediate with substrate; for 3-dehydroquinate dehydratase activity. 3-dehydroquinate is bound by residues arginine 171 and glutamine 196. The shikimate 5-dehydrogenase stretch occupies residues 209–478; it reads NLSPQSQICA…VLASLFSIAA (270 aa). 226–228 is a shikimate binding site; sequence SIG. The Proton acceptor; for shikimate dehydrogenase activity role is filled by lysine 277. Residues asparagine 298 and aspartate 313 each coordinate shikimate. Residues 337 to 341, 360 to 362, and glycine 435 each bind NADP(+); these read GAGGA and NRT. Glutamine 442 provides a ligand contact to shikimate.

This sequence in the N-terminal section; belongs to the type-I 3-dehydroquinase family. In the C-terminal section; belongs to the shikimate dehydrogenase family.

It carries out the reaction 3-dehydroquinate = 3-dehydroshikimate + H2O. It catalyses the reaction shikimate + NADP(+) = 3-dehydroshikimate + NADPH + H(+). It participates in metabolic intermediate biosynthesis; chorismate biosynthesis; chorismate from D-erythrose 4-phosphate and phosphoenolpyruvate: step 3/7. Its pathway is metabolic intermediate biosynthesis; chorismate biosynthesis; chorismate from D-erythrose 4-phosphate and phosphoenolpyruvate: step 4/7. In terms of biological role, bifunctional enzyme that catalyzes two sequential steps of the aromatic amino acids biosynthetic pathway. In the first reaction, the AroD domain catalyzes the cis-dehydration of 3-dehydroquinate (DHQ) and introduces the first double bond of the aromatic ring to yield 3-dehydroshikimate; in the second reaction, the AroE domain catalyzes the reversible NADPH linked reduction of 3-dehydroshikimate (DHSA) to yield shikimate (SA). The protein is Shikimate biosynthesis protein AroDE of Chlamydia muridarum (strain MoPn / Nigg).